We begin with the raw amino-acid sequence, 395 residues long: Xylose isomerase (395 aa).

Active-site residues include His54 and Asp57. The Mg(2+) site is built by Glu181, Glu217, His220, Asp245, Asp255, Asp257, and Asp293.

This sequence belongs to the xylose isomerase family. Homotetramer. The cofactor is Mg(2+).

It is found in the cytoplasm. The catalysed reaction is alpha-D-xylose = alpha-D-xylulofuranose. In Arthrobacter sp. (strain NRRL B3728), this protein is Xylose isomerase (xylA).